The chain runs to 442 residues: Putative mannan endo-1,6-alpha-mannosidase C1198.07c (442 aa).

The signal sequence occupies residues methionine 1 to alanine 19. Residues phenylalanine 20–tryptophan 421 lie on the Lumenal side of the membrane. N-linked (GlcNAc...) asparagine glycans are attached at residues asparagine 75, asparagine 124, asparagine 193, asparagine 229, asparagine 254, asparagine 257, and asparagine 356. The helical transmembrane segment at alanine 422–phenylalanine 442 threads the bilayer.

Belongs to the glycosyl hydrolase 76 family.

It is found in the endoplasmic reticulum membrane. The enzyme catalyses Random hydrolysis of (1-&gt;6)-alpha-D-mannosidic linkages in unbranched (1-&gt;6)-mannans.. The protein is Putative mannan endo-1,6-alpha-mannosidase C1198.07c of Schizosaccharomyces pombe (strain 972 / ATCC 24843) (Fission yeast).